A 119-amino-acid chain; its full sequence is UPF0102 protein FN1370 (119 aa).

It belongs to the UPF0102 family.

The sequence is that of UPF0102 protein FN1370 from Fusobacterium nucleatum subsp. nucleatum (strain ATCC 25586 / DSM 15643 / BCRC 10681 / CIP 101130 / JCM 8532 / KCTC 2640 / LMG 13131 / VPI 4355).